The sequence spans 406 residues: Tryptophan synthase beta chain (406 aa).

N6-(pyridoxal phosphate)lysine is present on Lys-99.

It belongs to the TrpB family. In terms of assembly, tetramer of two alpha and two beta chains. The cofactor is pyridoxal 5'-phosphate.

It carries out the reaction (1S,2R)-1-C-(indol-3-yl)glycerol 3-phosphate + L-serine = D-glyceraldehyde 3-phosphate + L-tryptophan + H2O. It functions in the pathway amino-acid biosynthesis; L-tryptophan biosynthesis; L-tryptophan from chorismate: step 5/5. Functionally, the beta subunit is responsible for the synthesis of L-tryptophan from indole and L-serine. This chain is Tryptophan synthase beta chain, found in Brucella canis (strain ATCC 23365 / NCTC 10854 / RM-666).